The sequence spans 122 residues: MAEMTVELVAVEQRLWSGSATLVSAQTTEGEIGIMPGHEPVLGQLIEGGTVSITPVDGERIVAAVHGGFLSVTATTVTILAESADMAQDIDVEAAKAVLAENSGDLEAIAVAKGQLRAVERA.

Belongs to the ATPase epsilon chain family. As to quaternary structure, F-type ATPases have 2 components, CF(1) - the catalytic core - and CF(0) - the membrane proton channel. CF(1) has five subunits: alpha(3), beta(3), gamma(1), delta(1), epsilon(1). CF(0) has three main subunits: a, b and c.

It is found in the cell membrane. In terms of biological role, produces ATP from ADP in the presence of a proton gradient across the membrane. The chain is ATP synthase epsilon chain from Rhodococcus erythropolis (strain PR4 / NBRC 100887).